Reading from the N-terminus, the 79-residue chain is RNA-binding protein Hfq (79 aa).

Residues 10–70 (DAFLNHVRKT…ISTIMPAQPI (61 aa)) enclose the Sm domain.

The protein belongs to the Hfq family. Homohexamer.

RNA chaperone that binds small regulatory RNA (sRNAs) and mRNAs to facilitate mRNA translational regulation in response to envelope stress, environmental stress and changes in metabolite concentrations. Also binds with high specificity to tRNAs. In Ruegeria pomeroyi (strain ATCC 700808 / DSM 15171 / DSS-3) (Silicibacter pomeroyi), this protein is RNA-binding protein Hfq.